A 245-amino-acid polypeptide reads, in one-letter code: tRNA pseudouridine synthase A (245 aa).

The Nucleophile role is filled by D52. Position 111 (Y111) interacts with substrate.

The protein belongs to the tRNA pseudouridine synthase TruA family. As to quaternary structure, homodimer.

It carries out the reaction uridine(38/39/40) in tRNA = pseudouridine(38/39/40) in tRNA. Its function is as follows. Formation of pseudouridine at positions 38, 39 and 40 in the anticodon stem and loop of transfer RNAs. The sequence is that of tRNA pseudouridine synthase A from Xanthobacter autotrophicus (strain ATCC BAA-1158 / Py2).